We begin with the raw amino-acid sequence, 159 residues long: Large ribosomal subunit protein uL22 (159 aa).

Residues 129–159 (VEGQQKAKMARQKAVTSVVKAPSKTQGGVQK) form a disordered region.

Belongs to the universal ribosomal protein uL22 family. As to quaternary structure, part of the 50S ribosomal subunit.

This protein binds specifically to 23S rRNA; its binding is stimulated by other ribosomal proteins, e.g. L4, L17, and L20. It is important during the early stages of 50S assembly. It makes multiple contacts with different domains of the 23S rRNA in the assembled 50S subunit and ribosome. Its function is as follows. The globular domain of the protein is located near the polypeptide exit tunnel on the outside of the subunit, while an extended beta-hairpin is found that lines the wall of the exit tunnel in the center of the 70S ribosome. This Mycoplasma pneumoniae (strain ATCC 29342 / M129 / Subtype 1) (Mycoplasmoides pneumoniae) protein is Large ribosomal subunit protein uL22 (rplV).